A 49-amino-acid polypeptide reads, in one-letter code: DNA-directed RNA polymerase subunit Rpo12 (49 aa).

Zn(2+)-binding residues include Cys11, Cys27, and Cys30.

Belongs to the archaeal Rpo12/eukaryotic RPC10 RNA polymerase subunit family. Part of the RNA polymerase complex. Requires Zn(2+) as cofactor.

It localises to the cytoplasm. It catalyses the reaction RNA(n) + a ribonucleoside 5'-triphosphate = RNA(n+1) + diphosphate. DNA-dependent RNA polymerase (RNAP) catalyzes the transcription of DNA into RNA using the four ribonucleoside triphosphates as substrates. The polypeptide is DNA-directed RNA polymerase subunit Rpo12 (Pyrococcus horikoshii (strain ATCC 700860 / DSM 12428 / JCM 9974 / NBRC 100139 / OT-3)).